The sequence spans 780 residues: Aconitate hydratase, mitochondrial (780 aa).

The transit peptide at 1–27 (MAPYSLLVTRLQKALGVRQYHVASVLC) directs the protein to the mitochondrion. Lysine 31 bears the N6-succinyllysine mark. Position 50 is an N6-acetyllysine; alternate (lysine 50). Position 50 is an N6-succinyllysine; alternate (lysine 50). Glutamine 99 is a substrate binding site. Residues lysine 138 and lysine 144 each carry the N6-acetyllysine; alternate modification. N6-succinyllysine; alternate occurs at positions 138 and 144. 192–194 (DSH) is a substrate binding site. Lysine 233 carries the N6-acetyllysine; alternate modification. At lysine 233 the chain carries N6-succinyllysine; alternate. Cysteine 385 is a [4Fe-4S] cluster binding site. Position 411 is an N6-succinyllysine (lysine 411). Positions 448 and 451 each coordinate [4Fe-4S] cluster. Arginine 474 and arginine 479 together coordinate substrate. 2 positions are modified to N6-acetyllysine; alternate: lysine 517 and lysine 523. 2 positions are modified to N6-succinyllysine; alternate: lysine 517 and lysine 523. Positions 524–537 (LEAPDADELPRSDF) are enriched in basic and acidic residues. The tract at residues 524-560 (LEAPDADELPRSDFDPGQDTYQHPPKDSSGQRVDVSP) is disordered. Lysine 549 carries the N6-succinyllysine modification. Residues 551–560 (SSGQRVDVSP) are compositionally biased toward polar residues. Serine 559 carries the phosphoserine modification. N6-acetyllysine; alternate is present on lysine 573. Position 573 is an N6-succinyllysine; alternate (lysine 573). N6-succinyllysine is present on residues lysine 577 and lysine 591. At lysine 605 the chain carries N6-acetyllysine; alternate. Lysine 605 is modified (N6-succinyllysine; alternate). A substrate-binding site is contributed by arginine 607. Lysine 628 is subject to N6-succinyllysine. Serine 670 carries the phosphoserine modification. 670–671 (SR) is a binding site for substrate. N6-succinyllysine is present on lysine 689. 2 positions are modified to N6-acetyllysine; alternate: lysine 723 and lysine 730. 2 positions are modified to N6-succinyllysine; alternate: lysine 723 and lysine 730. An N6-acetyllysine mark is found at lysine 736, lysine 739, and lysine 743.

The protein belongs to the aconitase/IPM isomerase family. As to quaternary structure, monomer. The cofactor is [4Fe-4S] cluster. Post-translationally, forms covalent cross-links mediated by transglutaminase TGM2, between a glutamine and the epsilon-amino group of a lysine residue, forming homopolymers and heteropolymers.

It is found in the mitochondrion. It catalyses the reaction citrate = D-threo-isocitrate. It participates in carbohydrate metabolism; tricarboxylic acid cycle; isocitrate from oxaloacetate: step 2/2. Catalyzes the isomerization of citrate to isocitrate via cis-aconitate. The chain is Aconitate hydratase, mitochondrial (Aco2) from Mus musculus (Mouse).